A 177-amino-acid polypeptide reads, in one-letter code: ATP synthase subunit delta (177 aa).

This sequence belongs to the ATPase delta chain family. As to quaternary structure, F-type ATPases have 2 components, F(1) - the catalytic core - and F(0) - the membrane proton channel. F(1) has five subunits: alpha(3), beta(3), gamma(1), delta(1), epsilon(1). F(0) has three main subunits: a(1), b(2) and c(10-14). The alpha and beta chains form an alternating ring which encloses part of the gamma chain. F(1) is attached to F(0) by a central stalk formed by the gamma and epsilon chains, while a peripheral stalk is formed by the delta and b chains.

It is found in the cell inner membrane. In terms of biological role, f(1)F(0) ATP synthase produces ATP from ADP in the presence of a proton or sodium gradient. F-type ATPases consist of two structural domains, F(1) containing the extramembraneous catalytic core and F(0) containing the membrane proton channel, linked together by a central stalk and a peripheral stalk. During catalysis, ATP synthesis in the catalytic domain of F(1) is coupled via a rotary mechanism of the central stalk subunits to proton translocation. Its function is as follows. This protein is part of the stalk that links CF(0) to CF(1). It either transmits conformational changes from CF(0) to CF(1) or is implicated in proton conduction. In Aeromonas hydrophila subsp. hydrophila (strain ATCC 7966 / DSM 30187 / BCRC 13018 / CCUG 14551 / JCM 1027 / KCTC 2358 / NCIMB 9240 / NCTC 8049), this protein is ATP synthase subunit delta.